The following is a 159-amino-acid chain: Kojic acid related protein 6 (159 aa).

Its function is as follows. Negatively regulates mycelium growth and conidial formation and is required for stress tolerance. Plays a role in kojic acid synthesis in coordination with kojA, kojR and kojT where it acts upstream of kojA. The sequence is that of Kojic acid related protein 6 from Aspergillus oryzae (strain ATCC 42149 / RIB 40) (Yellow koji mold).